A 319-amino-acid chain; its full sequence is MVLPPPDRRHVCLTTLVIMGSMAVMDAYLVEQNQGPRKIGVCIIVLVGDVCFLLVLRYVAVWVGAEVRTAKRGYAMILWFLYIFVLEIKLYFIFQNYKAARRGAADPVARKALTLLLSVCVPGLFLLLVALDRMEYVRTFRKREDLRGRLFWVALDLLDLLDMQASLWEPPRSGLPLWAEGLTFFYCYMLLLVLPCVALSEVSMQGEHIAPQKMMLYPVLSLATVNVVAVLARAANMALFRDSRVSAIFVGKNVVALATKACTFLEYRRQVRDFPPPALSLELQPPPPQRNSVPPPPPPLHGPPGRPHMSSPTRDPLDT.

Transmembrane regions (helical) follow at residues 10–30 (HVCLTTLVIMGSMAVMDAYLV), 43–63 (IIVLVGDVCFLLVLRYVAVWV), 74–94 (YAMILWFLYIFVLEIKLYFIF), 112–132 (ALTLLLSVCVPGLFLLLVALD), 150–170 (LFWVALDLLDLLDMQASLWEP), 174–194 (GLPLWAEGLTFFYCYMLLLVL), and 214–234 (MMLYPVLSLATVNVVAVLARA). Pro residues predominate over residues 277–306 (PALSLELQPPPPQRNSVPPPPPPLHGPPGR). A disordered region spans residues 277 to 319 (PALSLELQPPPPQRNSVPPPPPPLHGPPGRPHMSSPTRDPLDT).

The protein belongs to the TMEM121 family. In terms of tissue distribution, highly expressed in heart and detected in pancreas, liver and skeletal muscle.

The protein localises to the membrane. Functionally, may play a role in MAPK signaling. This is Transmembrane protein 121 (TMEM121) from Homo sapiens (Human).